A 336-amino-acid chain; its full sequence is MAELKLGYKASAEQFAPRELVELAVLAESAGMDSATVSDHFQPWRHEGGHAPFSLAWMTAVGERTKNLVLGTSVLTPTFRYNPAVIAQAFATMGCLYPGRIFLGVGTGEALNEIATGYAGEWPEFKERFARLRESVRLMRELWLGDRVDFDGEYYRTKGASIYDVPEGGIPVYIAAGGPVVAKYAGRAGDGFICTSGKGEELYAEKLIPAVKEGAAAADRDADAIDRMIEIKISYDTDPELALENTRFWAPLSLTAEQKHSIDDPIEMEKAADALPIEQVAKRWIVASDPDEAVEKVGQYVKWGLNHLVFHAPGHDQRRFLELFKRDLEPRLRKLA.

Coenzyme F420-(gamma-Glu)n is bound at residue Asp39. His40 (proton donor) is an active-site residue. Coenzyme F420-(gamma-Glu)n contacts are provided by residues Thr76 and 107-108 (TG). Catalysis depends on Glu109, which acts as the Proton acceptor. Residues Asn112, 177–178 (GG), and 180–181 (VV) each bind coenzyme F420-(gamma-Glu)n. Thr195, Lys198, Lys259, and Arg283 together coordinate substrate.

Belongs to the F420-dependent glucose-6-phosphate dehydrogenase family. Homodimer.

The catalysed reaction is oxidized coenzyme F420-(gamma-L-Glu)(n) + D-glucose 6-phosphate + H(+) = 6-phospho-D-glucono-1,5-lactone + reduced coenzyme F420-(gamma-L-Glu)(n). Catalyzes the coenzyme F420-dependent oxidation of glucose 6-phosphate (G6P) to 6-phosphogluconolactone. Appears to have a role in resistance to oxidative stress, via its consumption of G6P that serves as a source of reducing power to combat oxidative stress in mycobacteria. Cannot use NAD, NADP, FAD or FMN instead of coenzyme F420 as an electron acceptor. Exhibits nearly no activity with D-mannose-6-phosphate or D-fructose-6-phosphate as substrate. The polypeptide is F420-dependent glucose-6-phosphate dehydrogenase (fgd) (Mycolicibacterium smegmatis (strain ATCC 700084 / mc(2)155) (Mycobacterium smegmatis)).